A 134-amino-acid chain; its full sequence is Putative nickel-responsive regulator (134 aa).

Ni(2+) contacts are provided by H78, H89, H91, and C97.

Belongs to the transcriptional regulatory CopG/NikR family. Ni(2+) serves as cofactor.

Functionally, transcriptional regulator. The polypeptide is Putative nickel-responsive regulator (Chlorobaculum tepidum (strain ATCC 49652 / DSM 12025 / NBRC 103806 / TLS) (Chlorobium tepidum)).